A 287-amino-acid chain; its full sequence is MVITALARAKINLTLDVLGKRPDGYHEVEMVMQSIELHDRLEFRPCAAGGISLAVEGADLPPGKENLVYRAAELLRAAGGVRAGAEIRLKKAIPVAAGLGGGSADAAAALVALNEMWNTGFSPAGLMELAEQLGSDVPFGLMGGTALARGRGERLERLFPCPPLGLVLVKPPFGVSTAEVYRAFKPGLNPKKADAQAMVRAIKKGDAADIAACLGNALEPVTVKMYPEVAEIKKKLMEAGALGALMAGSGPTVFGLTADLESARQVAARYRRTDEQILVTRTFNPRL.

Residue K10 is part of the active site. Residue 94 to 104 (PVAAGLGGGSA) participates in ATP binding. D136 is an active-site residue.

It belongs to the GHMP kinase family. IspE subfamily.

It catalyses the reaction 4-CDP-2-C-methyl-D-erythritol + ATP = 4-CDP-2-C-methyl-D-erythritol 2-phosphate + ADP + H(+). It participates in isoprenoid biosynthesis; isopentenyl diphosphate biosynthesis via DXP pathway; isopentenyl diphosphate from 1-deoxy-D-xylulose 5-phosphate: step 3/6. Catalyzes the phosphorylation of the position 2 hydroxy group of 4-diphosphocytidyl-2C-methyl-D-erythritol. The protein is 4-diphosphocytidyl-2-C-methyl-D-erythritol kinase of Pelotomaculum thermopropionicum (strain DSM 13744 / JCM 10971 / SI).